A 491-amino-acid chain; its full sequence is Cobyric acid synthase (491 aa).

The 188-residue stretch at 250–437 folds into the GATase cobBQ-type domain; that stretch reads RLRVVVPVLP…LHGIFDHPAA (188 aa). C331 serves as the catalytic Nucleophile. The active site involves H429.

This sequence belongs to the CobB/CobQ family. CobQ subfamily.

Its pathway is cofactor biosynthesis; adenosylcobalamin biosynthesis. In terms of biological role, catalyzes amidations at positions B, D, E, and G on adenosylcobyrinic A,C-diamide. NH(2) groups are provided by glutamine, and one molecule of ATP is hydrogenolyzed for each amidation. The chain is Cobyric acid synthase from Xanthomonas campestris pv. campestris (strain B100).